The sequence spans 358 residues: Peptide chain release factor 1 (358 aa).

Gln233 carries the post-translational modification N5-methylglutamine.

Belongs to the prokaryotic/mitochondrial release factor family. Methylated by PrmC. Methylation increases the termination efficiency of RF1.

It is found in the cytoplasm. Functionally, peptide chain release factor 1 directs the termination of translation in response to the peptide chain termination codons UAG and UAA. In Staphylococcus haemolyticus (strain JCSC1435), this protein is Peptide chain release factor 1.